The sequence spans 1150 residues: Solute carrier family 12 member 6 (1150 aa).

At 1–135 the chain is on the cytoplasmic side; that stretch reads MHPPETTTKM…DEYFDKNLAL (135 aa). The tract at residues 20–66 is disordered; that stretch reads TKIDDIPGLSDTSPDLSSRSSSRVRFSSRESVPETSRSEPMSEMSGA. Residues 28 to 45 show a composition bias toward low complexity; that stretch reads LSDTSPDLSSRSSSRVRF. 2 positions are modified to phosphoserine: Ser-32 and Ser-120. Residues 136-158 traverse the membrane as a discontinuously helical segment; sequence FEEEMDTRPKVSSLLNRMANYTN. K(+) is bound by residues Ser-147 and Ser-148. Ser-148 carries the post-translational modification Phosphoserine. A chloride-binding site is contributed by Asn-151. Topologically, residues 159–165 are extracellular; it reads LTQGAKE. Residues 161–181 form a disordered region; it reads QGAKEHEEAENITEGKKKPTK. Over residues 163-177 the composition is skewed to basic and acidic residues; that stretch reads AKEHEEAENITEGKK. Residues 166 to 188 form a helical membrane-spanning segment; sequence HEEAENITEGKKKPTKTPQMGTF. The Cytoplasmic segment spans residues 189-211; that stretch reads MGVYLPCLQNIFGVILFLRLTWV. A helical transmembrane segment spans residues 212–245; sequence VGTAGVLQAFAIVLICCCCTMLTAISMSAIATNG. Residues 246-263 lie on the Extracellular side of the membrane; it reads VVPAGGSYFMISRALGPE. 2 consecutive transmembrane segments (helical) span residues 264–287 and 288–316; these read FGGA…ILGA and IEIF…AMLN. The Extracellular segment spans residues 317-433; that stretch reads NMRVYGTAFL…FVHNNVTSIQ (117 aa). Residues Cys-375 and Cys-390 are joined by a disulfide bond. 4 N-linked (GlcNAc...) asparagine glycosylation sites follow: Asn-379, Asn-398, Asn-411, and Asn-428. A disulfide bond links Cys-410 and Cys-420. The chain crosses the membrane as a helical span at residues 434 to 454; the sequence is GIPGLASGIITENLWSNYLPK. K(+)-binding residues include Ile-443, Thr-444, and Asn-446. Chloride is bound by residues Ile-443 and Thr-444. Residues Leu-447 and Trp-448 each contribute to the chloride site. The Cytoplasmic portion of the chain corresponds to 455–464; that stretch reads GEIIEKPSAK. Residues 465–487 form a helical membrane-spanning segment; the sequence is SSDVLGSLNHEYVLVDITTSFTL. Residues 488-518 are Extracellular-facing; it reads LVGIFFPSVTGIMAGSNRSGDLKDAQKSIPI. A helical membrane pass occupies residues 519 to 545; the sequence is GTILAILTTSFVYLSNVVLFGACIEGV. At 546-568 the chain is on the cytoplasmic side; the sequence is VLRDKFGDAVKGNLVVGTLSWPS. The next 2 membrane-spanning stretches (helical) occupy residues 569–589 and 590–612; these read PWVI…QSLT and GAPR…VFGH. Residue Ile-603 coordinates chloride. The Cytoplasmic segment spans residues 613–629; sequence SKANGEPTWALLLTAAI. Helical transmembrane passes span 630–649 and 650–665; these read AELG…LSMF and FLMC…ALQT. Topologically, residues 666 to 1150 are cytoplasmic; it reads LLRTPNWRPR…GGSEVITIYS (485 aa). Residues 682-691 are scissor helix; the sequence is ALSFMGMSIC. Ser-736 carries the post-translational modification Phosphoserine. Thr-778 carries the phosphothreonine modification. Ser-981 is subject to Phosphoserine. At Thr-991 the chain carries Phosphothreonine; by OXSR1 and STK39. A phosphoserine mark is found at Ser-1023, Ser-1029, and Ser-1032. A Phosphothreonine; by OXSR1 and STK39 modification is found at Thr-1048. Tyr-1121 carries the post-translational modification Phosphotyrosine. The interval 1133 to 1150 is interaction with CKB; it reads ERVLLVRGGGSEVITIYS.

Belongs to the SLC12A transporter family. K/Cl co-transporter subfamily. In terms of assembly, homodimer; adopts a domain-swap conformation at the scissor helices connecting the transmembrane domain and C-terminal domain. Heterodimer with K-Cl cotransporter SLC12A5. Interacts (via C-terminus) with CKB; the interaction may be required for potassium-chloride cotransport activity. Phosphorylated, phosphorylation regulates transporter activity. Phosphorylated at Thr-991 and Thr-1048 by OXSR1/OSR1 and STK39/SPAK downstream of WNK kinases (WNK1, WNK2, WNK3 or WNK4), inhibiting the potassium-chloride cotransport activity. In terms of processing, N-glycosylated. As to expression, expressed in brain (at protein level). Highly expressed in heart, brain and kidney. Detected at lower levels in skeletal muscle, placenta, lung and pancreas. Detected in umbilical vein endothelial cells. More abundant in kidney. In terms of tissue distribution, testis specific.

The protein localises to the cell membrane. It is found in the basolateral cell membrane. The catalysed reaction is K(+)(in) + chloride(in) = K(+)(out) + chloride(out). Its activity is regulated as follows. Inhibited following phosphorylation by OXSR1/OSR1 and STK39/SPAK: phosphorylation takes place downstream of WNK kinases (WNK1, WNK2, WNK3 or WNK4) in response to hyperosmotic stress and subsequent cell shrinkage. Activated by N-ethylmaleimide (NEM). Inhibited by DIOA, bumetanide and furosemide. Functionally, mediates electroneutral potassium-chloride cotransport when activated by cell swelling. May contribute to cell volume homeostasis in single cells. Mediates electroneutral potassium-chloride cotransport when activated by cell swelling. May contribute to cell volume homeostasis in single cells. In terms of biological role, mediates electroneutral potassium-chloride cotransport when activated by cell swelling. May contribute to cell volume homeostasis in single cells. The protein is Solute carrier family 12 member 6 of Homo sapiens (Human).